The following is a 189-amino-acid chain: Protein F29A7.6 (189 aa).

Positions 124–161 (KSLGGQKLAALDKKSQSKRERRQQNERNEETTGGRRFN) are disordered. Residues 133 to 161 (ALDKKSQSKRERRQQNERNEETTGGRRFN) show a composition bias toward basic and acidic residues.

Belongs to the MPP6 family.

The polypeptide is Protein F29A7.6 (Caenorhabditis elegans).